A 126-amino-acid chain; its full sequence is S-adenosylmethionine decarboxylase proenzyme (126 aa).

Catalysis depends on Ser-63, which acts as the Schiff-base intermediate with substrate; via pyruvic acid. Ser-63 is subject to Pyruvic acid (Ser); by autocatalysis. His-68 serves as the catalytic Proton acceptor; for processing activity. The active-site Proton donor; for catalytic activity is Cys-83.

This sequence belongs to the prokaryotic AdoMetDC family. Type 1 subfamily. As to quaternary structure, heterotetramer of two alpha and two beta chains arranged as a dimer of alpha/beta heterodimers. The cofactor is pyruvate. In terms of processing, is synthesized initially as an inactive proenzyme. Formation of the active enzyme involves a self-maturation process in which the active site pyruvoyl group is generated from an internal serine residue via an autocatalytic post-translational modification. Two non-identical subunits are generated from the proenzyme in this reaction, and the pyruvate is formed at the N-terminus of the alpha chain, which is derived from the carboxyl end of the proenzyme. The post-translation cleavage follows an unusual pathway, termed non-hydrolytic serinolysis, in which the side chain hydroxyl group of the serine supplies its oxygen atom to form the C-terminus of the beta chain, while the remainder of the serine residue undergoes an oxidative deamination to produce ammonia and the pyruvoyl group blocking the N-terminus of the alpha chain.

The catalysed reaction is S-adenosyl-L-methionine + H(+) = S-adenosyl 3-(methylsulfanyl)propylamine + CO2. It participates in amine and polyamine biosynthesis; S-adenosylmethioninamine biosynthesis; S-adenosylmethioninamine from S-adenosyl-L-methionine: step 1/1. Functionally, catalyzes the decarboxylation of S-adenosylmethionine to S-adenosylmethioninamine (dcAdoMet), the propylamine donor required for the synthesis of the polyamines spermine and spermidine from the diamine putrescine. The chain is S-adenosylmethionine decarboxylase proenzyme from Syntrophomonas wolfei subsp. wolfei (strain DSM 2245B / Goettingen).